The primary structure comprises 132 residues: PGA2-homolog C27.01c (132 aa).

Residues 17 to 34 (WIRIIVYVGGYMLIRPYL) form a helical membrane-spanning segment. Disordered stretches follow at residues 50–90 (LLEG…DAEF) and 106–132 (EYFK…HLED). Positions 62 to 75 (EMTHGTKPKEHGEF) are enriched in basic and acidic residues. Residues 76-87 (DTDDEEEEENPD) are compositionally biased toward acidic residues. Phosphothreonine is present on Thr-77. Basic and acidic residues predominate over residues 106–115 (EYFKNQDKSP). A compositionally biased stretch (acidic residues) spans 119–132 (YADDDEDIEEHLED).

The protein belongs to the PGA2 family.

The protein localises to the endoplasmic reticulum membrane. The protein resides in the nucleus membrane. Functionally, involved processing and trafficking glycosylated proteins. In Schizosaccharomyces pombe (strain 972 / ATCC 24843) (Fission yeast), this protein is PGA2-homolog C27.01c.